The following is a 402-amino-acid chain: Sex hormone-binding globulin (402 aa).

The N-terminal stretch at 1 to 29 (MESRGPLATSRLLLLLLLLLLRHTRQGWA) is a signal peptide. Threonine 36 carries an O-linked (GalNAc...) threonine glycan. Laminin G-like domains are found at residues 45 to 217 (VHLS…LRSC) and 224 to 390 (GIFL…THSC). 2 disulfide bridges follow: cysteine 193-cysteine 217 and cysteine 362-cysteine 390. Asparagine 380 and asparagine 396 each carry an N-linked (GlcNAc...) asparagine glycan.

In terms of assembly, homodimer. In terms of processing, variant Asn-356 contains one N-linked (GlcNAc...) at position 356. In terms of tissue distribution, isoform 1 and isoform 2 are present in liver and testis.

The protein resides in the secreted. Functions as an androgen transport protein, but may also be involved in receptor mediated processes. Each dimer binds one molecule of steroid. Specific for 5-alpha-dihydrotestosterone, testosterone, and 17-beta-estradiol. Regulates the plasma metabolic clearance rate of steroid hormones by controlling their plasma concentration. The sequence is that of Sex hormone-binding globulin from Homo sapiens (Human).